Consider the following 227-residue polypeptide: Guanylate kinase (227 aa).

The Guanylate kinase-like domain maps to 21-199 (GNLFMVVAPS…ALAELECIVA (179 aa)). 28–35 (APSGAGKS) serves as a coordination point for ATP.

The protein belongs to the guanylate kinase family.

The protein localises to the cytoplasm. It catalyses the reaction GMP + ATP = GDP + ADP. Essential for recycling GMP and indirectly, cGMP. In Burkholderia lata (strain ATCC 17760 / DSM 23089 / LMG 22485 / NCIMB 9086 / R18194 / 383), this protein is Guanylate kinase.